A 530-amino-acid polypeptide reads, in one-letter code: CTP synthase (530 aa).

The tract at residues 1 to 264 is amidoligase domain; the sequence is MPKLIIVTGG…GDFLTRRLRL (264 aa). S13 is a binding site for CTP. S13 contributes to the UTP binding site. 14-19 serves as a coordination point for ATP; that stretch reads GVGKGV. Y54 provides a ligand contact to L-glutamine. D71 lines the ATP pocket. 2 residues coordinate Mg(2+): D71 and E139. Residues 146 to 148, 185 to 190, and K221 each bind CTP; these read DYE and KTKPLQ. UTP-binding positions include 185–190 and K221; that span reads KTKPLQ. One can recognise a Glutamine amidotransferase type-1 domain in the interval 289–530; the sequence is SVGMCGKYVE…LLKAALFAKR (242 aa). G351 lines the L-glutamine pocket. Residue C378 is the Nucleophile; for glutamine hydrolysis of the active site. L-glutamine contacts are provided by residues 379 to 382, E402, and R459; that span reads FGMQ. Catalysis depends on residues H504 and E506.

This sequence belongs to the CTP synthase family. In terms of assembly, homotetramer.

The catalysed reaction is UTP + L-glutamine + ATP + H2O = CTP + L-glutamate + ADP + phosphate + 2 H(+). It catalyses the reaction L-glutamine + H2O = L-glutamate + NH4(+). It carries out the reaction UTP + NH4(+) + ATP = CTP + ADP + phosphate + 2 H(+). It functions in the pathway pyrimidine metabolism; CTP biosynthesis via de novo pathway; CTP from UDP: step 2/2. With respect to regulation, allosterically activated by GTP, when glutamine is the substrate; GTP has no effect on the reaction when ammonia is the substrate. The allosteric effector GTP functions by stabilizing the protein conformation that binds the tetrahedral intermediate(s) formed during glutamine hydrolysis. Inhibited by the product CTP, via allosteric rather than competitive inhibition. Its function is as follows. Catalyzes the ATP-dependent amination of UTP to CTP with either L-glutamine or ammonia as the source of nitrogen. Regulates intracellular CTP levels through interactions with the four ribonucleotide triphosphates. The protein is CTP synthase of Pyrobaculum aerophilum (strain ATCC 51768 / DSM 7523 / JCM 9630 / CIP 104966 / NBRC 100827 / IM2).